The primary structure comprises 157 residues: Transcriptional repressor NrdR (157 aa).

Residues cysteine 3–cysteine 34 fold into a zinc finger. In terms of domain architecture, ATP-cone spans leucine 49 to valine 139.

The protein belongs to the NrdR family. Requires Zn(2+) as cofactor.

In terms of biological role, negatively regulates transcription of bacterial ribonucleotide reductase nrd genes and operons by binding to NrdR-boxes. The chain is Transcriptional repressor NrdR from Oceanobacillus iheyensis (strain DSM 14371 / CIP 107618 / JCM 11309 / KCTC 3954 / HTE831).